We begin with the raw amino-acid sequence, 264 residues long: Thymidylate synthase (264 aa).

R21 provides a ligand contact to dUMP. H51 is a binding site for (6R)-5,10-methylene-5,6,7,8-tetrahydrofolate. A dUMP-binding site is contributed by 126–127; it reads RR. C146 (nucleophile) is an active-site residue. Residues 166–169, N177, and 207–209 contribute to the dUMP site; these read RSCD and HLY. A (6R)-5,10-methylene-5,6,7,8-tetrahydrofolate-binding site is contributed by D169. A263 provides a ligand contact to (6R)-5,10-methylene-5,6,7,8-tetrahydrofolate.

It belongs to the thymidylate synthase family. Bacterial-type ThyA subfamily. As to quaternary structure, homodimer.

Its subcellular location is the cytoplasm. The catalysed reaction is dUMP + (6R)-5,10-methylene-5,6,7,8-tetrahydrofolate = 7,8-dihydrofolate + dTMP. It functions in the pathway pyrimidine metabolism; dTTP biosynthesis. Its function is as follows. Catalyzes the reductive methylation of 2'-deoxyuridine-5'-monophosphate (dUMP) to 2'-deoxythymidine-5'-monophosphate (dTMP) while utilizing 5,10-methylenetetrahydrofolate (mTHF) as the methyl donor and reductant in the reaction, yielding dihydrofolate (DHF) as a by-product. This enzymatic reaction provides an intracellular de novo source of dTMP, an essential precursor for DNA biosynthesis. The polypeptide is Thymidylate synthase (Xenorhabdus nematophila (strain ATCC 19061 / DSM 3370 / CCUG 14189 / LMG 1036 / NCIMB 9965 / AN6)).